The chain runs to 1068 residues: Transcription factor PDR1 (1068 aa).

The interval 1 to 38 (MRGLTPKNGVHIETGPDTESSADSSNFSTGFSGKIRKP) is disordered. The span at 17 to 31 (DTESSADSSNFSTGF) shows a compositional bias: polar residues. The residue at position 21 (Ser-21) is a Phosphoserine. Residues 46–72 (CDNCRKRKIKCNGKFPCASCEIYSCEC) constitute a DNA-binding region (zn(2)-C6 fungal-type). 2 disordered regions span residues 95–120 (TVQV…DGPC) and 133–166 (KLGG…SESQ). Polar residues predominate over residues 104–114 (SSSTSFSNPQR). A compositionally biased stretch (low complexity) spans 135–146 (GGRSSGDNSGSD). 3 positions are modified to phosphoserine: Ser-930, Ser-942, and Ser-948. Positions 1005 to 1029 (NTNEINNNNNNNNNNKNNINNINNN) are disordered. The 9aaTAD signature appears at 1054–1062 (EDLYSILWS).

The protein resides in the nucleus. In terms of biological role, positive regulator of proteins involved in permeability. PDR1 and PDR3 jointly control the transcription level of both SNQ2 and PDR5. The protein is Transcription factor PDR1 (PDR1) of Saccharomyces cerevisiae (strain ATCC 204508 / S288c) (Baker's yeast).